The primary structure comprises 245 residues: MIIPALDFIDGSVVRLHQGDYGRQRDYDGDALARLLEYQRQGAAQLHLVDLSGARDPARRQLPMLTRLLRALSVPVQVGGGVRSAEDVATLLDAGATRVVVGSTAVRQPQEVARWFTRFGADRLVLALDVRIAANGDKRVAVSGWQEDSGVTLEQTVAHFLPLGLRHVLCTDIACDGTLGGANVALYRQICPRYPQIEFQSSGGIGALQDITALRGSGVQGIIVGRALLEGKFSVKEAIACWQNA.

Asp-7 serves as the catalytic Proton acceptor. Residue Asp-129 is the Proton donor of the active site.

Belongs to the HisA/HisF family.

It localises to the cytoplasm. It carries out the reaction 1-(5-phospho-beta-D-ribosyl)-5-[(5-phospho-beta-D-ribosylamino)methylideneamino]imidazole-4-carboxamide = 5-[(5-phospho-1-deoxy-D-ribulos-1-ylimino)methylamino]-1-(5-phospho-beta-D-ribosyl)imidazole-4-carboxamide. Its pathway is amino-acid biosynthesis; L-histidine biosynthesis; L-histidine from 5-phospho-alpha-D-ribose 1-diphosphate: step 4/9. The polypeptide is 1-(5-phosphoribosyl)-5-[(5-phosphoribosylamino)methylideneamino] imidazole-4-carboxamide isomerase (Edwardsiella ictaluri (strain 93-146)).